A 471-amino-acid chain; its full sequence is ATP synthase subunit beta (471 aa).

154 to 161 provides a ligand contact to ATP; that stretch reads GGAGVGKT.

The protein belongs to the ATPase alpha/beta chains family. As to quaternary structure, F-type ATPases have 2 components, CF(1) - the catalytic core - and CF(0) - the membrane proton channel. CF(1) has five subunits: alpha(3), beta(3), gamma(1), delta(1), epsilon(1). CF(0) has three main subunits: a(1), b(2) and c(9-12). The alpha and beta chains form an alternating ring which encloses part of the gamma chain. CF(1) is attached to CF(0) by a central stalk formed by the gamma and epsilon chains, while a peripheral stalk is formed by the delta and b chains.

It is found in the cell membrane. The enzyme catalyses ATP + H2O + 4 H(+)(in) = ADP + phosphate + 5 H(+)(out). In terms of biological role, produces ATP from ADP in the presence of a proton gradient across the membrane. The catalytic sites are hosted primarily by the beta subunits. The sequence is that of ATP synthase subunit beta from Mesomycoplasma hyopneumoniae (strain 232) (Mycoplasma hyopneumoniae).